A 340-amino-acid chain; its full sequence is Putative 2-hydroxyacid dehydrogenase C1773.17c (340 aa).

Residues 169–170 (AI), 249–251 (TAR), and aspartate 275 contribute to the NAD(+) site. Arginine 251 is an active-site residue. Glutamate 280 is an active-site residue. Histidine 298 acts as the Proton donor in catalysis. 298 to 301 (HCGV) is an NAD(+) binding site.

The protein belongs to the D-isomer specific 2-hydroxyacid dehydrogenase family.

The protein is Putative 2-hydroxyacid dehydrogenase C1773.17c of Schizosaccharomyces pombe (strain 972 / ATCC 24843) (Fission yeast).